A 469-amino-acid chain; its full sequence is Putative dipeptidase SAR1836 (469 aa).

Position 84 (H84) interacts with Zn(2+). D86 is a catalytic residue. D115 provides a ligand contact to Zn(2+). E149 serves as the catalytic Proton acceptor. Residues E150, D173, and H440 each coordinate Zn(2+).

Belongs to the peptidase M20A family. Zn(2+) is required as a cofactor.

The sequence is that of Putative dipeptidase SAR1836 from Staphylococcus aureus (strain MRSA252).